Consider the following 185-residue polypeptide: Large ribosomal subunit protein uL6 (185 aa).

The protein belongs to the universal ribosomal protein uL6 family. As to quaternary structure, part of the 50S ribosomal subunit.

In terms of biological role, this protein binds to the 23S rRNA, and is important in its secondary structure. It is located near the subunit interface in the base of the L7/L12 stalk, and near the tRNA binding site of the peptidyltransferase center. The sequence is that of Large ribosomal subunit protein uL6 from Staphylothermus marinus (strain ATCC 43588 / DSM 3639 / JCM 9404 / F1).